The primary structure comprises 460 residues: NADH-ubiquinone oxidoreductase chain 4 (460 aa).

13 consecutive transmembrane segments (helical) span residues 20-42 (AKWL…LSWL), 61-81 (PLST…ILAS), 94-113 (RAYI…AFGA), 117-139 (IMFY…RWGN), 148-168 (TYFL…LLLM), 195-215 (LWWA…GVHL), 225-245 (PIAG…YGMM), 258-278 (LAYP…SICL), 285-304 (SLIA…GILI), 308-330 (WGFT…LFCL), 351-371 (MILP…LALP), 394-414 (LILT…LFLM), and 436-456 (LLII…ELMW).

The protein belongs to the complex I subunit 4 family.

The protein resides in the mitochondrion membrane. The enzyme catalyses a ubiquinone + NADH + 5 H(+)(in) = a ubiquinol + NAD(+) + 4 H(+)(out). Functionally, core subunit of the mitochondrial membrane respiratory chain NADH dehydrogenase (Complex I) that is believed to belong to the minimal assembly required for catalysis. Complex I functions in the transfer of electrons from NADH to the respiratory chain. The immediate electron acceptor for the enzyme is believed to be ubiquinone. This is NADH-ubiquinone oxidoreductase chain 4 (MT-ND4) from Oncorhynchus mykiss (Rainbow trout).